We begin with the raw amino-acid sequence, 614 residues long: uncharacterized protein (614 aa).

This is an uncharacterized protein from Archaeoglobus fulgidus (strain ATCC 49558 / DSM 4304 / JCM 9628 / NBRC 100126 / VC-16).